Here is a 178-residue protein sequence, read N- to C-terminus: MSGGKYVDSEGHLYTAPIREQGNIYKPNNRDMAEEMHEKQVYDAHTKEIDLVNRDPKHLNDDVVKIDFEDVIAEPEGTHSFDGIWKASFTTFTVTKYWFYRLLSALFGIPMALIWGIYFAILSFLHIWAVVPCIKSFLIEIQCISRVYSIYVHTFCDPLFEAIGKIFSSIRINMQKEI.

Serine 2 carries the post-translational modification N-acetylserine. Serine 2 carries the post-translational modification Phosphoserine. The required for homooligomerization stretch occupies residues 2–94 (SGGKYVDSEG…WKASFTTFTV (93 aa)). Residues 2–104 (SGGKYVDSEG…TKYWFYRLLS (103 aa)) are Cytoplasmic-facing. Lysine 5 carries the N6-acetyllysine; alternate modification. A Glycyl lysine isopeptide (Lys-Gly) (interchain with G-Cter in ubiquitin); alternate cross-link involves residue lysine 5. Residue tyrosine 6 is modified to Phosphotyrosine. Serine 9 is subject to Phosphoserine. Position 14 is a phosphotyrosine; by ABL1 (tyrosine 14). The residue at position 25 (tyrosine 25) is a Phosphotyrosine. Residues lysine 26, lysine 39, lysine 47, and lysine 57 each participate in a glycyl lysine isopeptide (Lys-Gly) (interchain with G-Cter in ubiquitin) cross-link. Positions 82–94 (DGIWKASFTTFTV) are interaction with CAVIN3. The helical intramembrane region spans 105–125 (ALFGIPMALIWGIYFAILSFL). The Cytoplasmic segment spans residues 126–178 (HIWAVVPCIKSFLIEIQCISRVYSIYVHTFCDPLFEAIGKIFSSIRINMQKEI). Positions 131–142 (VPCIKSFLIEIQ) are interacts with SPRY1, SPRY2, SPRY3 and SPRY4. 3 S-palmitoyl cysteine lipidation sites follow: cysteine 133, cysteine 143, and cysteine 156. Residues 149 to 160 (SIYVHTFCDPLF) form an interacts with SPRY1, SPRY2, and SPRY4 region. Residues 167–178 (FSSIRINMQKEI) form an interacts with SPRY1, SPRY2, SPRY3 and SPRY4 region.

It belongs to the caveolin family. As to quaternary structure, homooligomer. Interacts with GLIPR2. Interacts with NOSTRIN. Interacts with SNAP25 and STX1A. Interacts (via the N-terminus) with DPP4; the interaction is direct. Interacts with CTNNB1, CDH1 and JUP. Interacts with PACSIN2; this interaction induces membrane tubulation. Interacts with SLC7A9. Interacts with BMX and BTK. Interacts with TGFBR1. Interacts with CAVIN3 (via leucine-zipper domain) in a cholesterol-sensitive manner. Interacts with CAVIN1. Interacts with EHD2 in a cholesterol-dependent manner. Forms a ternary complex with UBXN6 and VCP; mediates CAV1 targeting to lysosomes for degradation. Interacts with ABCG1; this interaction regulates ABCG1-mediated cholesterol efflux. Interacts with NEU3; this interaction enhances NEU3 sialidase activity within caveola. Interacts (via C-terminus) with SPRY1, SPRY2 (via C-terminus), SPRY3, and SPRY4. Interacts with IGFBP5; this interaction allows trafficking of IGFBP5 from the plasma membrane to the nucleus. Post-translationally, phosphorylated at Tyr-14 by ABL1 in response to oxidative stress. Ubiquitinated. Undergo monoubiquitination and multi- and/or polyubiquitination. Monoubiquitination of N-terminal lysines promotes integration in a ternary complex with UBXN6 and VCP which promotes oligomeric CAV1 targeting to lysosomes for degradation. Ubiquitinated by ZNRF1; leading to degradation and modulation of the TLR4-mediated immune response.

It localises to the golgi apparatus membrane. Its subcellular location is the cell membrane. The protein resides in the membrane. The protein localises to the caveola. It is found in the membrane raft. Its function is as follows. May act as a scaffolding protein within caveolar membranes. Forms a stable heterooligomeric complex with CAV2 that targets to lipid rafts and drives caveolae formation. Mediates the recruitment of CAVIN proteins (CAVIN1/2/3/4) to the caveolae. Interacts directly with G-protein alpha subunits and can functionally regulate their activity. Involved in the costimulatory signal essential for T-cell receptor (TCR)-mediated T-cell activation. Its binding to DPP4 induces T-cell proliferation and NF-kappa-B activation in a T-cell receptor/CD3-dependent manner. Recruits CTNNB1 to caveolar membranes and may regulate CTNNB1-mediated signaling through the Wnt pathway. Negatively regulates TGFB1-mediated activation of SMAD2/3 by mediating the internalization of TGFBR1 from membrane rafts leading to its subsequent degradation. Binds 20(S)-hydroxycholesterol (20(S)-OHC). In Loxodonta africana (African elephant), this protein is Caveolin-1 (CAV1).